Consider the following 349-residue polypeptide: Homoserine O-succinyltransferase (349 aa).

Catalysis depends on Cys146, which acts as the Acyl-thioester intermediate. Substrate contacts are provided by Lys167 and Ser196. His239 functions as the Proton acceptor in the catalytic mechanism. Glu241 is an active-site residue. Residue Arg253 coordinates substrate.

This sequence belongs to the MetA family.

The protein localises to the cytoplasm. It carries out the reaction L-homoserine + succinyl-CoA = O-succinyl-L-homoserine + CoA. It functions in the pathway amino-acid biosynthesis; L-methionine biosynthesis via de novo pathway; O-succinyl-L-homoserine from L-homoserine: step 1/1. In terms of biological role, transfers a succinyl group from succinyl-CoA to L-homoserine, forming succinyl-L-homoserine. In vitro, can also use glutaryl-CoA as acyl donor. This is Homoserine O-succinyltransferase from Thiobacillus denitrificans (strain ATCC 25259 / T1).